We begin with the raw amino-acid sequence, 376 residues long: Beta-centractin (376 aa).

The residue at position 1 (M1) is an N-acetylmethionine. 3'-nitrotyrosine is present on Y4.

The protein belongs to the actin family. ARP1 subfamily.

It localises to the cytoplasm. It is found in the cytoskeleton. Its subcellular location is the microtubule organizing center. The protein resides in the centrosome. In terms of biological role, component of a multi-subunit complex involved in microtubule based vesicle motility. It is associated with the centrosome. This chain is Beta-centractin (Actr1b), found in Mus musculus (Mouse).